Reading from the N-terminus, the 306-residue chain is Serine/threonine-protein kinase csk1 (306 aa).

One can recognise a Protein kinase domain in the interval 11 to 306 (LTDIRHLTDG…KVSARLSQYA (296 aa)). ATP contacts are provided by residues 17–25 (LTDGTISEV) and Lys-40. Residue Asp-129 is the Proton acceptor of the active site.

Belongs to the protein kinase superfamily. CMGC Ser/Thr protein kinase family. CDC2/CDKX subfamily.

It catalyses the reaction L-seryl-[protein] + ATP = O-phospho-L-seryl-[protein] + ADP + H(+). The enzyme catalyses L-threonyl-[protein] + ATP = O-phospho-L-threonyl-[protein] + ADP + H(+). Functionally, acts as a CAK-activating kinase that specifically activates crk1 of the crk1-mcs2 CAK complex. In Schizosaccharomyces pombe (strain 972 / ATCC 24843) (Fission yeast), this protein is Serine/threonine-protein kinase csk1 (csk1).